Reading from the N-terminus, the 1037-residue chain is Ribonuclease E (1037 aa).

Disordered regions lie at residues 1 to 23 (MAED…LPER), 47 to 90 (FDGR…ETPV), and 106 to 369 (VSEA…PILS). The segment covering 47–67 (FDGRQRSAHSTVDKADAERVR) has biased composition (basic and acidic residues). 2 stretches are compositionally biased toward low complexity: residues 68–90 (AALT…ETPV) and 106–126 (VSEA…PAAE). Composition is skewed to acidic residues over residues 127-141 (AEAE…EAET) and 196-226 (VVDD…DDDQ). The span at 230-242 (PRRRRRGRRGRGR) shows a compositional bias: basic residues. Acidic residues predominate over residues 248-284 (NDDATSDADTDSTEDQTDGDEQESGEDSDDSGDEDST). The segment covering 291-301 (RRRRRRRRRKS) has biased composition (basic residues). Residues 320–335 (VHERAPRTERSDKSDD) are compositionally biased toward basic and acidic residues. Residues 427–504 (GNIYLGIVQN…GHKGARLTTQ (78 aa)) enclose the S1 motif domain. A coiled-coil region spans residues 561-589 (EDIRSDVERLQKRWSEIEAKAAEVTEKKA). Mg(2+) is bound by residues D694 and D738. Positions 796 and 799 each coordinate Zn(2+). The segment at 810 to 1037 (PIDSASSNGG…ARPAGPPSHD (228 aa)) is disordered. Positions 834–843 (RRGKRGKKGA) are enriched in basic residues. The segment covering 844–864 (ARTEEVHVAKVPDHTPGEHPM) has biased composition (basic and acidic residues). A compositionally biased stretch (acidic residues) spans 879–891 (EDHEDHEDHETAE). Residues 897-913 (EVRDDTRDEHDADERAH) show a composition bias toward basic and acidic residues. The segment covering 923–1006 (GDEDLDDSDE…DSDSDEDEEP (84 aa)) has biased composition (acidic residues).

It belongs to the RNase E/G family. As to quaternary structure, assembles into a homotetramer formed by a dimer of dimers. Interacts with DNA-binding protein HhupB. Mg(2+) serves as cofactor. Requires Zn(2+) as cofactor.

It is found in the cytoplasm. The catalysed reaction is Endonucleolytic cleavage of single-stranded RNA in A- and U-rich regions.. In terms of biological role, endoribonuclease that plays a central role in RNA processing and decay. Plays a major role in pre-16S rRNA maturation, probably generating the mature 5'-end, and a minor role in pre-5S and pre-23S rRNA maturation. Probably also processes tRNA. RNase E and HupB jointly contribute to cellular adaptation to changing growth conditions and survival during antibiotic treatment. Overexpression or depletion leads to changes in gene expression; overexpression induces metabolic slowdown and cell stress while depleted strains grow less well than induced strains. This Mycolicibacterium smegmatis (strain ATCC 700084 / mc(2)155) (Mycobacterium smegmatis) protein is Ribonuclease E (rne).